A 326-amino-acid chain; its full sequence is MAPPENGILEVLENLLDRYKINLLQMMFGTFIATIVFFGGLMTFVEKYLPNSIRQSFRYGKHSFKGETDPLVAWLEVPKSWFKHFYTFALFWSWLAFYVLVSTVREQKEAPEYVLQFLDIMGGGRSHRKVEIDSTTACVGAFMLTLQCTRRFYETNFVQIFSKKSKINLSHYAVGYVHYFGAVIALLSNTSGFVRGSKPMEFSLDKLTSQQILYLGVFFLAWQQQYASNMILVNLRKDPRTGSVKTEKHLLPKGGLFNLLSSPHMFLEVVMYFCIADLYMPVRIWRLIFLWVASNQTINALLTHKWYQETFREYPKNRRAIIPFLL.

5 helical membrane passes run 26-46 (MMFGTFIATIVFFGGLMTFVE), 84-104 (HFYTFALFWSWLAFYVLVSTV), 167-187 (INLSHYAVGYVHYFGAVIALL), 212-232 (ILYLGVFFLAWQQQYASNMIL), and 256-276 (LFNLLSSPHMFLEVVMYFCIA).

Belongs to the steroid 5-alpha reductase family. Polyprenal reductase subfamily.

Its subcellular location is the endoplasmic reticulum membrane. The enzyme catalyses a di-trans,poly-cis-dolichal + NADP(+) = a di-trans,poly-cis-polyprenal + NADPH + H(+). The protein operates within protein modification; protein glycosylation. Functionally, plays a key role in early steps of protein N-linked glycosylation by being involved in the conversion of polyprenol into dolichol. Acts as a polyprenal reductase that mediates the reduction of polyprenal into dolichal in a NADP-dependent mechanism. Dolichols are required for the synthesis of dolichol-linked monosaccharides and the oligosaccharide precursor used for N-glycosylation. This is Polyprenal reductase from Drosophila melanogaster (Fruit fly).